A 326-amino-acid polypeptide reads, in one-letter code: Protein phosphatase 1 regulatory subunit SDS22 homolog (326 aa).

Positions Met1–Glu22 are disordered. LRR repeat units lie at residues Asp35–Phe57, Pro58–Leu80, Val81–Leu102, Val103–Lys126, Glu128–Leu146, Thr147–Asn170, Asp172–Leu190, Gln191–Leu212, Asn213–Asn236, Leu238–Leu256, Glu257–Lys280, and Leu281–Arg304.

The protein belongs to the SDS22 family.

It localises to the nucleus. Its function is as follows. Regulatory subunit of protein phosphatase 1. This chain is Protein phosphatase 1 regulatory subunit SDS22 homolog (sds-22), found in Caenorhabditis elegans.